A 748-amino-acid polypeptide reads, in one-letter code: Peptidyl serine alpha-galactosyltransferase (748 aa).

Positions 1 to 26 (MVAVFHGPLVLGALLLLLALQHGASA) are cleaved as a signal peptide. The Extracellular portion of the chain corresponds to 27–710 (EEPGFANRTG…GPSLHSLLGR (684 aa)). 3 N-linked (GlcNAc...) asparagine glycosylation sites follow: Asn-33, Asn-184, and Asn-297. In terms of domain architecture, ShKT spans 415 to 449 (CQDFHPKCEEWKESGECTKNENYMTENCRKTCDKC). 3 disulfides stabilise this stretch: Cys-415–Cys-449, Cys-422–Cys-442, and Cys-431–Cys-446. Disordered stretches follow at residues 474–576 (ELQP…ADPK) and 611–670 (EVPK…KKNI). Over residues 531–565 (SPPPSPPPASPPPVDSPPPMSPPPESPSPDKPPPK) the composition is skewed to pro residues. Basic and acidic residues predominate over residues 611 to 637 (EVPKRTKATDEEEEAPKAKHAESHLTL). Residues 711-731 (LNTWQALVLWLVVVVAFLALV) form a helical membrane-spanning segment. At 732–748 (PRIAKLRRRQRSGMRTE) the chain is on the cytoplasmic side.

The cofactor is Mn(2+).

The protein localises to the membrane. In terms of biological role, glycosyltransferase involved in the O-galactosylation of several proteins including extensins. Catalyzes the transfer of alpha-galactosyl to Ser residues. Hydroxylation of proline residues adjacent to the serine acceptor is required for activity. Utilizes selectively UDP-galactose as a donor nucleotide sugar. The protein is Peptidyl serine alpha-galactosyltransferase of Chlamydomonas reinhardtii (Chlamydomonas smithii).